The primary structure comprises 37 residues: Large ribosomal subunit protein bL36B (37 aa).

The protein belongs to the bacterial ribosomal protein bL36 family.

The chain is Large ribosomal subunit protein bL36B from Kineococcus radiotolerans (strain ATCC BAA-149 / DSM 14245 / SRS30216).